The following is a 386-amino-acid chain: Succinate--CoA ligase [ADP-forming] subunit beta (386 aa).

The 236-residue stretch at 9 to 244 (KEILRSFGVP…LDEEDPAEVE (236 aa)) folds into the ATP-grasp domain. Residues lysine 46, 53 to 55 (GRG), glutamate 99, alanine 102, and glutamate 107 contribute to the ATP site. Mg(2+)-binding residues include asparagine 199 and aspartate 213. Residues asparagine 264 and 321–323 (GIM) each bind substrate.

The protein belongs to the succinate/malate CoA ligase beta subunit family. In terms of assembly, heterotetramer of two alpha and two beta subunits. Mg(2+) is required as a cofactor.

It catalyses the reaction succinate + ATP + CoA = succinyl-CoA + ADP + phosphate. The enzyme catalyses GTP + succinate + CoA = succinyl-CoA + GDP + phosphate. It functions in the pathway carbohydrate metabolism; tricarboxylic acid cycle; succinate from succinyl-CoA (ligase route): step 1/1. Functionally, succinyl-CoA synthetase functions in the citric acid cycle (TCA), coupling the hydrolysis of succinyl-CoA to the synthesis of either ATP or GTP and thus represents the only step of substrate-level phosphorylation in the TCA. The beta subunit provides nucleotide specificity of the enzyme and binds the substrate succinate, while the binding sites for coenzyme A and phosphate are found in the alpha subunit. The protein is Succinate--CoA ligase [ADP-forming] subunit beta of Acidovorax ebreus (strain TPSY) (Diaphorobacter sp. (strain TPSY)).